We begin with the raw amino-acid sequence, 447 residues long: MTVTQEASPKRESLHIIDDRTGSYYSIPIVNNAINASDFKKVTAPEDKAYPANQTENGLRVYDPGYSNTAVSHSKITYIDGLKGTIQYRGYSINDIVGRKTFIDTAHLLIWGHWPSTAEAETLQQRLDQVPVPQDFVFNVIKSFPRDGSLMGMVIAGLSALQSSDMNAIPAHVGKTIYLNNPELADQQIIRVMANMSMLTAAAYCHHIGRDFTPPRAGLSYIENFLLMTGHVEAATGLPNPRYVNAIERLWVLIADHEMTCSTAALLQTASALPDVISCMVSAISALYGPLHGGAIEVAYKNIESIGSISNVPAKIARVKAGKERLYGYGHRVYRVTDPRFVFIREILNELSEEVEKDPLLKVAFEVDRVASEDEYFTSRNLRPNADLFAAFVYKALGFPPEFILPLSILSRTQGFMAHWREAMGNPPRIWRPGQIYTGDLNKSMDE.

Catalysis depends on residues H331 and D387.

This sequence belongs to the citrate synthase family.

It participates in secondary metabolite biosynthesis. Citrate synthase-like protein; part of the gene cluster that mediates the biosynthesis of oryzines, natural products with an unusual maleidride backbone. The two subunits of the fungal fatty acid synthase oryfasA and oryfasB probably form octenoic acid. This fatty acid is most likely activated by the acyl-CoA ligase oryP to give octenyl-CoA before the citrate synthase-like protein oryE catalyzes condensation with oxaloacetate to form tricarboxylic acid. The next steps of the pathways are conjectural, but a favorite possible route has been proposed, beginning with decarboxylation and concomitant dehydration by the decarboxylase oryM, followed by tautomerization, which may lead to the production of a diene intermediate. Reduction of this diene intermediate could give the known metabolite piliformic acid. On the pathway to oryzine B and oryzine A, however, hydroxylation of the diene by the alpha-ketoglutarate-dependent dioxygenase oryG and lactonisation by the lactonohydrolases oryH or oryL could give oryzine B directly. Finally, enoyl reduction by the dehydrogenase oryD would then convert oryzine B into oryzine A. The sequence is that of Citrate synthase-like protein oryE from Aspergillus oryzae (strain ATCC 42149 / RIB 40) (Yellow koji mold).